Consider the following 429-residue polypeptide: Small ribosomal subunit protein uS5m (429 aa).

The interval 108-127 (AGAKKGRGKRTKKKKRKDLN) is disordered. Over residues 111-125 (KKGRGKRTKKKKRKD) the composition is skewed to basic residues. The S5 DRBM domain maps to 218-282 (FDTRILEVRN…NRAVHHLYYI (65 aa)).

The protein belongs to the universal ribosomal protein uS5 family. Component of the mitochondrial ribosome small subunit (28S) which comprises a 12S rRNA and about 30 distinct proteins.

It localises to the mitochondrion. This Pongo abelii (Sumatran orangutan) protein is Small ribosomal subunit protein uS5m (MRPS5).